The sequence spans 190 residues: Protein GrpE (190 aa).

Residues 1–18 (MTETPNTSSEEIQTSEPS) show a composition bias toward polar residues. A disordered region spans residues 1–21 (MTETPNTSSEEIQTSEPSPDN).

It belongs to the GrpE family. As to quaternary structure, homodimer.

The protein localises to the cytoplasm. In terms of biological role, participates actively in the response to hyperosmotic and heat shock by preventing the aggregation of stress-denatured proteins, in association with DnaK and GrpE. It is the nucleotide exchange factor for DnaK and may function as a thermosensor. Unfolded proteins bind initially to DnaJ; upon interaction with the DnaJ-bound protein, DnaK hydrolyzes its bound ATP, resulting in the formation of a stable complex. GrpE releases ADP from DnaK; ATP binding to DnaK triggers the release of the substrate protein, thus completing the reaction cycle. Several rounds of ATP-dependent interactions between DnaJ, DnaK and GrpE are required for fully efficient folding. The chain is Protein GrpE from Chlamydia trachomatis serovar L2b (strain UCH-1/proctitis).